Consider the following 497-residue polypeptide: Guanosine-5'-triphosphate,3'-diphosphate pyrophosphatase (497 aa).

It belongs to the GppA/Ppx family. GppA subfamily.

It carries out the reaction guanosine 3'-diphosphate 5'-triphosphate + H2O = guanosine 3',5'-bis(diphosphate) + phosphate + H(+). Its pathway is purine metabolism; ppGpp biosynthesis; ppGpp from GTP: step 2/2. Functionally, catalyzes the conversion of pppGpp to ppGpp. Guanosine pentaphosphate (pppGpp) is a cytoplasmic signaling molecule which together with ppGpp controls the 'stringent response', an adaptive process that allows bacteria to respond to amino acid starvation, resulting in the coordinated regulation of numerous cellular activities. This chain is Guanosine-5'-triphosphate,3'-diphosphate pyrophosphatase, found in Aliivibrio fischeri (strain MJ11) (Vibrio fischeri).